Reading from the N-terminus, the 161-residue chain is Beta-lactoglobulin-2 (161 aa).

2 cysteine pairs are disulfide-bonded: Cys-66–Cys-159 and Cys-106–Cys-119.

The protein belongs to the calycin superfamily. Lipocalin family. In terms of assembly, monomer. Synthesized in mammary gland and secreted in milk.

Its subcellular location is the secreted. Its function is as follows. Primary component of whey, it binds retinol and is probably involved in the transport of that molecule. This is Beta-lactoglobulin-2 (LGB2) from Canis lupus familiaris (Dog).